Here is a 326-residue protein sequence, read N- to C-terminus: Phospho-N-acetylmuramoyl-pentapeptide-transferase (326 aa).

A run of 9 helical transmembrane segments spans residues 3-23 (ISISAGIVTFLLTLVGIPAFI), 51-71 (TMGGLVFLITSVLVAFFFALF), 79-99 (VGMILFILVLYGLVGFLDDFL), 115-135 (LALQLLGGVIFYLFYERGGDI), 138-158 (VFGYPVHLGFFYIFFALFWLV), 169-189 (GVDGLASISVVISLFAYGVIA), 195-215 (MDILLVILAMIGGLLGFFIFN), 221-243 (VFMGDVGSLALGGMLAAISMALH), and 306-326 (FFFWGVGLLASLLTLAILYLM).

The protein belongs to the glycosyltransferase 4 family. MraY subfamily. Mg(2+) is required as a cofactor.

The protein resides in the cell membrane. The enzyme catalyses UDP-N-acetyl-alpha-D-muramoyl-L-alanyl-gamma-D-glutamyl-L-lysyl-D-alanyl-D-alanine + di-trans,octa-cis-undecaprenyl phosphate = Mur2Ac(oyl-L-Ala-gamma-D-Glu-L-Lys-D-Ala-D-Ala)-di-trans,octa-cis-undecaprenyl diphosphate + UMP. The protein operates within cell wall biogenesis; peptidoglycan biosynthesis. Its function is as follows. Catalyzes the initial step of the lipid cycle reactions in the biosynthesis of the cell wall peptidoglycan: transfers peptidoglycan precursor phospho-MurNAc-pentapeptide from UDP-MurNAc-pentapeptide onto the lipid carrier undecaprenyl phosphate, yielding undecaprenyl-pyrophosphoryl-MurNAc-pentapeptide, known as lipid I. The protein is Phospho-N-acetylmuramoyl-pentapeptide-transferase of Streptococcus pneumoniae serotype 2 (strain D39 / NCTC 7466).